We begin with the raw amino-acid sequence, 140 residues long: Putative pre-16S rRNA nuclease (140 aa).

This sequence belongs to the YqgF nuclease family.

The protein localises to the cytoplasm. Could be a nuclease involved in processing of the 5'-end of pre-16S rRNA. The sequence is that of Putative pre-16S rRNA nuclease from Enterococcus faecalis (strain ATCC 700802 / V583).